The primary structure comprises 238 residues: tRNA (guanine-N(7)-)-methyltransferase (238 aa).

Positions 70, 95, 122, and 145 each coordinate S-adenosyl-L-methionine. The active site involves Asp145. Substrate-binding positions include Lys149, Asp181, and 216–219; that span reads TKFE.

Belongs to the class I-like SAM-binding methyltransferase superfamily. TrmB family.

It catalyses the reaction guanosine(46) in tRNA + S-adenosyl-L-methionine = N(7)-methylguanosine(46) in tRNA + S-adenosyl-L-homocysteine. Its pathway is tRNA modification; N(7)-methylguanine-tRNA biosynthesis. In terms of biological role, catalyzes the formation of N(7)-methylguanine at position 46 (m7G46) in tRNA. This Neisseria meningitidis serogroup C / serotype 2a (strain ATCC 700532 / DSM 15464 / FAM18) protein is tRNA (guanine-N(7)-)-methyltransferase.